A 700-amino-acid polypeptide reads, in one-letter code: ATP-dependent zinc metalloprotease FtsH (700 aa).

The Cytoplasmic portion of the chain corresponds to 1 to 10 (MNNNKGGFLR). The helical transmembrane segment at 11 to 31 (SSVFYIFIFLAVVGMVYGLFG) threads the bilayer. The Extracellular portion of the chain corresponds to 32–130 (NDKTTTKTIT…LVTKQAENSG (99 aa)). The chain crosses the membrane as a helical span at residues 131 to 151 (FWLNLLVSLVPVLLIVAVFYL). At 152–700 (MMNQAGGGKG…ETDDNNTENK (549 aa)) the chain is on the cytoplasmic side. 227–234 (GPPGTGKT) provides a ligand contact to ATP. Position 449 (His-449) interacts with Zn(2+). Residue Glu-450 is part of the active site. 2 residues coordinate Zn(2+): His-453 and Asp-525. Positions 644 to 700 (KSFEEAKAAADAKDSQAEQRFEKQDEEKSSDDHSESKNEDTDSTDKSETDDNNTENK) are disordered.

This sequence in the central section; belongs to the AAA ATPase family. It in the C-terminal section; belongs to the peptidase M41 family. As to quaternary structure, homohexamer. Zn(2+) is required as a cofactor.

It is found in the cell membrane. In terms of biological role, acts as a processive, ATP-dependent zinc metallopeptidase for both cytoplasmic and membrane proteins. Plays a role in the quality control of integral membrane proteins. The protein is ATP-dependent zinc metalloprotease FtsH of Leuconostoc mesenteroides subsp. mesenteroides (strain ATCC 8293 / DSM 20343 / BCRC 11652 / CCM 1803 / JCM 6124 / NCDO 523 / NBRC 100496 / NCIMB 8023 / NCTC 12954 / NRRL B-1118 / 37Y).